Here is a 685-residue protein sequence, read N- to C-terminus: Exocyst complex component 8 (685 aa).

The 101-residue stretch at 151–251 (YLVYNGDLTE…WLEILEQTKK (101 aa)) folds into the PH domain. A compositionally biased stretch (basic and acidic residues) spans 254-263 (ALNEKQKQEE). The tract at residues 254–273 (ALNEKQKQEETTPQLPVVPE) is disordered.

The protein belongs to the EXO84 family. The exocyst complex is composed of exoc1, exoc2, exoc3, exoc4, exoc5, exoc6, exoc7 and exoc8.

It is found in the cytoplasm. The protein localises to the perinuclear region. It localises to the cell projection. Its subcellular location is the growth cone. In terms of biological role, component of the exocyst complex involved in the docking of exocytic vesicles with fusion sites on the plasma membrane. The chain is Exocyst complex component 8 (exoc8) from Xenopus laevis (African clawed frog).